The sequence spans 339 residues: Phenylalanine--tRNA ligase alpha subunit (339 aa).

Glutamate 247 is a binding site for Mg(2+).

Belongs to the class-II aminoacyl-tRNA synthetase family. Phe-tRNA synthetase alpha subunit type 1 subfamily. As to quaternary structure, tetramer of two alpha and two beta subunits. Mg(2+) is required as a cofactor.

Its subcellular location is the cytoplasm. It carries out the reaction tRNA(Phe) + L-phenylalanine + ATP = L-phenylalanyl-tRNA(Phe) + AMP + diphosphate + H(+). The polypeptide is Phenylalanine--tRNA ligase alpha subunit (Deinococcus geothermalis (strain DSM 11300 / CIP 105573 / AG-3a)).